The following is a 216-amino-acid chain: Probable GTP-binding protein EngB (216 aa).

One can recognise an EngB-type G domain in the interval 37–214 (GSVEIAFAGR…RAAMIRLLDE (178 aa)). Residues 45 to 52 (GRSNVGKS), 72 to 76 (GRTQE), 92 to 95 (DMPG), 159 to 162 (TKAD), and 193 to 195 (TSS) contribute to the GTP site. Mg(2+) is bound by residues Ser52 and Thr74.

This sequence belongs to the TRAFAC class TrmE-Era-EngA-EngB-Septin-like GTPase superfamily. EngB GTPase family. Mg(2+) serves as cofactor.

In terms of biological role, necessary for normal cell division and for the maintenance of normal septation. The protein is Probable GTP-binding protein EngB of Rhodopseudomonas palustris (strain ATCC BAA-98 / CGA009).